An 81-amino-acid chain; its full sequence is Photosystem I iron-sulfur center (81 aa).

2 4Fe-4S ferredoxin-type domains span residues 2–31 (SHTV…MAPW) and 39–68 (VASA…VRVY). Residues Cys-11, Cys-14, Cys-17, Cys-21, Cys-48, Cys-51, Cys-54, and Cys-58 each coordinate [4Fe-4S] cluster.

In terms of assembly, the eukaryotic PSI reaction center is composed of at least 11 subunits. It depends on [4Fe-4S] cluster as a cofactor.

The protein localises to the plastid. Its subcellular location is the chloroplast thylakoid membrane. The enzyme catalyses reduced [plastocyanin] + hnu + oxidized [2Fe-2S]-[ferredoxin] = oxidized [plastocyanin] + reduced [2Fe-2S]-[ferredoxin]. Functionally, apoprotein for the two 4Fe-4S centers FA and FB of photosystem I (PSI); essential for photochemical activity. FB is the terminal electron acceptor of PSI, donating electrons to ferredoxin. The C-terminus interacts with PsaA/B/D and helps assemble the protein into the PSI complex. Required for binding of PsaD and PsaE to PSI. PSI is a plastocyanin/cytochrome c6-ferredoxin oxidoreductase, converting photonic excitation into a charge separation, which transfers an electron from the donor P700 chlorophyll pair to the spectroscopically characterized acceptors A0, A1, FX, FA and FB in turn. The sequence is that of Photosystem I iron-sulfur center from Tupiella akineta (Green alga).